We begin with the raw amino-acid sequence, 117 residues long: Protein SMALL AUXIN UP-REGULATED RNA 54 (117 aa).

Belongs to the ARG7 family. Expressed in trichomes. Hardly observed in leaves.

The protein resides in the cell membrane. Functionally, provide a mechanistic link between auxin and plasma membrane H(+)-ATPases (PM H(+)-ATPases, e.g. AHA1 and AHA2), and triggers PM H(+)-ATPases activity by promoting phosphorylation of their C-terminal autoinhibitory domain as a result of PP2C-D subfamily of type 2C phosphatases inhibition, thus leading to the acidification of the apoplast and the facilitation of solutes and water uptake to drive cell expansion. Triggers plant growth probably by promoting cell elongation. Regulates branch angles and bending. This chain is Protein SMALL AUXIN UP-REGULATED RNA 54, found in Arabidopsis thaliana (Mouse-ear cress).